The following is a 525-amino-acid chain: NADH-quinone oxidoreductase subunit N (525 aa).

The next 14 membrane-spanning stretches (helical) occupy residues 26–46, 53–73, 90–110, 143–163, 167–187, 202–222, 246–266, 278–298, 314–334, 341–361, 368–388, 411–431, 449–469, and 487–507; these read LSPM…DAFA, VLQP…VVLL, PTLF…LLVA, VQTE…LFVA, LLVM…LCGL, YFLL…FAYG, LYLS…AAPF, PTPI…GALL, PVIW…ALTQ, LAYS…GSNI, MFYL…VSLV, LAGT…TSGF, LVVV…RVIV, and PTLT…LGVA.

This sequence belongs to the complex I subunit 2 family. As to quaternary structure, NDH-1 is composed of 14 different subunits. Subunits NuoA, H, J, K, L, M, N constitute the membrane sector of the complex.

The protein localises to the cell membrane. The catalysed reaction is a quinone + NADH + 5 H(+)(in) = a quinol + NAD(+) + 4 H(+)(out). NDH-1 shuttles electrons from NADH, via FMN and iron-sulfur (Fe-S) centers, to quinones in the respiratory chain. The immediate electron acceptor for the enzyme in this species is believed to be a menaquinone. Couples the redox reaction to proton translocation (for every two electrons transferred, four hydrogen ions are translocated across the cytoplasmic membrane), and thus conserves the redox energy in a proton gradient. The protein is NADH-quinone oxidoreductase subunit N of Parafrankia sp. (strain EAN1pec).